Consider the following 134-residue polypeptide: Small ribosomal subunit protein uS8c (134 aa).

It belongs to the universal ribosomal protein uS8 family. In terms of assembly, part of the 30S ribosomal subunit.

The protein localises to the plastid. It is found in the chloroplast. Its function is as follows. One of the primary rRNA binding proteins, it binds directly to 16S rRNA central domain where it helps coordinate assembly of the platform of the 30S subunit. This Pelargonium hortorum (Common geranium) protein is Small ribosomal subunit protein uS8c (rps8).